Consider the following 858-residue polypeptide: Volume-regulated anion channel subunit LRRC8D (858 aa).

At 1-22 the chain is on the cytoplasmic side; it reads MFTLAEVASLNDIQPTYRILKP. The helical transmembrane segment at 23–48 threads the bilayer; it reads WWDVFMDYLAVVMLMVAIFAGTMQLT. The Extracellular portion of the chain corresponds to 49–163; that stretch reads KDQVVCLPVL…YHLALPWYSK (115 aa). Cysteine 54 and cysteine 354 form a disulfide bridge. Positions 118–137 are disordered; the sequence is AESTFPSQETKKEKRDPTGR. A compositionally biased stretch (basic and acidic residues) spans 126–137; the sequence is ETKKEKRDPTGR. Residues 164–182 traverse the membrane as a helical segment; sequence YFPYLALIHTIILMVSSNF. The Cytoplasmic segment spans residues 183 to 308; the sequence is WFKYPKTCSK…EDSDLIYKLY (126 aa). The interval 221-251 is disordered; that stretch reads SEENKQRITGAQTLPKHVSTSSDEGSPSAST. The span at 227–251 shows a compositional bias: polar residues; that stretch reads RITGAQTLPKHVSTSSDEGSPSAST. Serine 241, serine 242, and serine 246 each carry phosphoserine. The chain crosses the membrane as a helical span at residues 309–330; it reads VVQTLIKTAKFIFILCYTANFV. The Extracellular portion of the chain corresponds to 331–360; the sequence is NAISFEHVCKPKVEHLTGYEVFECTHNMAY. Residues 361-386 traverse the membrane as a helical segment; sequence MLKKLLISYISIICVYGFICLYTLFW. The Cytoplasmic segment spans residues 387-858; that stretch reads LFRIPLKEYS…DVNVPFANGI (472 aa). LRR repeat units follow at residues 514–534, 538–559, 561–582, 589–609, 612–632, 636–657, 659–680, 684–705, 707–728, 730–751, 753–774, 776–797, and 799–820; these read NLQE…AFSF, HLRC…VYLL, NLRE…IGLE, HLKI…ITDV, HLTK…NSLK, NVAE…IFSL, NLQE…ISFQ, RLTC…ITHV, NLES…VFSL, KLRC…IGLL, NLQH…LFKC, KLRT…ISQL, and QLTQ…LGQC.

Belongs to the LRRC8 family. In terms of assembly, heterohexamer; oligomerizes with other LRRC8 proteins (LRRC8A, LRRC8B, LRRC8C and/or LRRC8E) to form a heterohexamer. In vivo, the subunit composition may depend primarily on expression levels, and heterooligomeric channels containing various proportions of the different LRRC8 proteins may coexist.

The protein resides in the cell membrane. The protein localises to the endoplasmic reticulum membrane. It carries out the reaction chloride(in) = chloride(out). The enzyme catalyses iodide(out) = iodide(in). It catalyses the reaction taurine(out) = taurine(in). Non-essential component of the volume-regulated anion channel (VRAC, also named VSOAC channel), an anion channel required to maintain a constant cell volume in response to extracellular or intracellular osmotic changes. The VRAC channel conducts iodide better than chloride and can also conduct organic osmolytes like taurine. Plays a redundant role in the efflux of amino acids, such as aspartate, in response to osmotic stress. Channel activity requires LRRC8A plus at least one other family member (LRRC8B, LRRC8C, LRRC8D or LRRC8E); channel characteristics depend on the precise subunit composition. Also acts as a regulator of glucose-sensing in pancreatic beta cells: VRAC currents, generated in response to hypotonicity- or glucose-induced beta cell swelling, depolarize cells, thereby causing electrical excitation, leading to increase glucose sensitivity and insulin secretion. VRAC channels containing LRRC8D inhibit transport of immunoreactive cyclic dinucleotide GMP-AMP (2'-3'-cGAMP), an immune messenger produced in response to DNA virus in the cytosol. The polypeptide is Volume-regulated anion channel subunit LRRC8D (Rattus norvegicus (Rat)).